A 393-amino-acid polypeptide reads, in one-letter code: MSGDFDTIRDASSPDEVQLVRLLEEKIKSLQIEIENLRKELNYYKAEMEKMLSPPLIEAVVLDVLPDGRVLVRSSSGPNLVVNIASHIDQKLIKPGISVALNQRGSTILEVLPQKEDPIVKTMEIIERPNVTYSEIGGLEEQIRELREVVELPLKNPEIFREIGVEPPKGVLLYGPPGTGKTMLAKAVATESNAVFIHVVASEFAQKFVGEGARIVRELFEMAKRKAPSIIFIDEIDAIGAKRIDIGTSGEREIQRTLMQLLAELDGFDPLDNVKIIAATNRIDILDPALLRPGRFDRIIEVPLPDFKGRTEIFNIYLKKMKIEDNINLELLSQLTEGFSGADIKNVCVEAAYMAIRDGRNKVTMNDLVEAINKINVKRNKMESMKERREKYS.

The stretch at 15-53 forms a coiled coil; the sequence is DEVQLVRLLEEKIKSLQIEIENLRKELNYYKAEMEKMLS. Residues 178 to 183 and tyrosine 317 contribute to the ATP site; that span reads GTGKTM. Residues 365 to 393 adopt a coiled-coil conformation; sequence MNDLVEAINKINVKRNKMESMKERREKYS. The interval 391–393 is docks into pockets in the proteasome alpha-ring to cause gate opening; that stretch reads KYS.

Belongs to the AAA ATPase family. In terms of assembly, homohexamer. The hexameric complex has a two-ring architecture resembling a top hat that caps the 20S proteasome core at one or both ends. Upon ATP-binding, the C-terminus of PAN interacts with the alpha-rings of the proteasome core by binding to the intersubunit pockets.

The protein resides in the cytoplasm. Its function is as follows. ATPase which is responsible for recognizing, binding, unfolding and translocation of substrate proteins into the archaeal 20S proteasome core particle. Is essential for opening the gate of the 20S proteasome via an interaction with its C-terminus, thereby allowing substrate entry and access to the site of proteolysis. Thus, the C-termini of the proteasomal ATPase function like a 'key in a lock' to induce gate opening and therefore regulate proteolysis. Unfolding activity requires energy from ATP hydrolysis, whereas ATP binding alone promotes ATPase-20S proteasome association which triggers gate opening, and supports translocation of unfolded substrates. The protein is Proteasome-activating nucleotidase of Saccharolobus solfataricus (strain ATCC 35092 / DSM 1617 / JCM 11322 / P2) (Sulfolobus solfataricus).